Consider the following 191-residue polypeptide: Calcium-activated potassium channel subunit beta-1 (191 aa).

Residues 2 to 18 (GKKLVMAQRRGETRALC) lie on the Cytoplasmic side of the membrane. A helical membrane pass occupies residues 19–39 (LGVAMVVGAVITYYILGTTVL). Topologically, residues 40–157 (PLYQKSVWTQ…YRRLYGPQSL (118 aa)) are extracellular. 2 N-linked (GlcNAc...) asparagine glycosylation sites follow: Asn-80 and Asn-142. Residues 158–178 (LFSLFWPTFLLTGGLLIIVMV) form a helical membrane-spanning segment. The Cytoplasmic segment spans residues 179 to 191 (KINQSLSILAAQR).

The protein belongs to the KCNMB (TC 8.A.14.1) family. KCNMB1 subfamily. In terms of assembly, interacts with KCNMA1 tetramer. There are probably 4 molecules of KCMNB1 per KCNMA1 tetramer. N-glycosylated.

The protein resides in the membrane. In terms of biological role, regulatory subunit of the calcium activated potassium KCNMA1 (maxiK) channel. Modulates the calcium sensitivity and gating kinetics of KCNMA1, thereby contributing to KCNMA1 channel diversity. Increases the apparent Ca(2+)/voltage sensitivity of the KCNMA1 channel. It also modifies KCNMA1 channel kinetics and alters its pharmacological properties. It slows down the activation and the deactivation kinetics of the channel. Acts as a negative regulator of smooth muscle contraction by enhancing the calcium sensitivity to KCNMA1. Its presence is also a requirement for internal binding of the KCNMA1 channel opener dehydrosoyasaponin I (DHS-1) triterpene glycoside and for external binding of the agonist hormone 17-beta-estradiol (E2). Increases the binding activity of charybdotoxin (CTX) toxin to KCNMA1 peptide blocker by increasing the CTX association rate and decreasing the dissociation rate. The chain is Calcium-activated potassium channel subunit beta-1 (KCNMB1) from Bos taurus (Bovine).